Reading from the N-terminus, the 566-residue chain is Oxygen-dependent choline dehydrogenase (566 aa).

FAD is bound at residue 7-36; it reads DYIICGAGSAGNVLATRLTEDPNVTVLLLE. A disordered region spans residues 180–203; it reads NGYQQEGFGPMDRTVTPKGRRAST. The Proton acceptor role is filled by histidine 474.

This sequence belongs to the GMC oxidoreductase family. Requires FAD as cofactor.

The catalysed reaction is choline + A = betaine aldehyde + AH2. The enzyme catalyses betaine aldehyde + NAD(+) + H2O = glycine betaine + NADH + 2 H(+). It participates in amine and polyamine biosynthesis; betaine biosynthesis via choline pathway; betaine aldehyde from choline (cytochrome c reductase route): step 1/1. In terms of biological role, involved in the biosynthesis of the osmoprotectant glycine betaine. Catalyzes the oxidation of choline to betaine aldehyde and betaine aldehyde to glycine betaine at the same rate. In Burkholderia ambifaria (strain MC40-6), this protein is Oxygen-dependent choline dehydrogenase.